The primary structure comprises 324 residues: Acetyl-coenzyme A carboxylase carboxyl transferase subunit alpha (324 aa).

Residues 37 to 291 form the CoA carboxyltransferase C-terminal domain; the sequence is ILEDKLENLE…DLMLRKTFEQ (255 aa).

This sequence belongs to the AccA family. As to quaternary structure, acetyl-CoA carboxylase is a heterohexamer composed of biotin carboxyl carrier protein (AccB), biotin carboxylase (AccC) and two subunits each of ACCase subunit alpha (AccA) and ACCase subunit beta (AccD).

The protein resides in the cytoplasm. The catalysed reaction is N(6)-carboxybiotinyl-L-lysyl-[protein] + acetyl-CoA = N(6)-biotinyl-L-lysyl-[protein] + malonyl-CoA. Its pathway is lipid metabolism; malonyl-CoA biosynthesis; malonyl-CoA from acetyl-CoA: step 1/1. Its function is as follows. Component of the acetyl coenzyme A carboxylase (ACC) complex. First, biotin carboxylase catalyzes the carboxylation of biotin on its carrier protein (BCCP) and then the CO(2) group is transferred by the carboxyltransferase to acetyl-CoA to form malonyl-CoA. The protein is Acetyl-coenzyme A carboxylase carboxyl transferase subunit alpha of Bacillus cereus (strain Q1).